The primary structure comprises 124 residues: Glycine cleavage system H protein (124 aa).

The Lipoyl-binding domain occupies 22–104 (VATVGITEFA…YGAGWLFRVE (83 aa)). Lys-63 carries the post-translational modification N6-lipoyllysine.

The protein belongs to the GcvH family. In terms of assembly, the glycine cleavage system is composed of four proteins: P, T, L and H. It depends on (R)-lipoate as a cofactor.

In terms of biological role, the glycine cleavage system catalyzes the degradation of glycine. The H protein shuttles the methylamine group of glycine from the P protein to the T protein. The protein is Glycine cleavage system H protein of Beutenbergia cavernae (strain ATCC BAA-8 / DSM 12333 / CCUG 43141 / JCM 11478 / NBRC 16432 / NCIMB 13614 / HKI 0122).